The sequence spans 95 residues: Sec-independent protein translocase protein TatA (95 aa).

The helical transmembrane segment at 1–21 (MGGISIWQLLIIALIVVLLFG) threads the bilayer. Residues 50 to 61 (KALEDNAADKPA) are compositionally biased toward basic and acidic residues. The tract at residues 50-95 (KALEDNAADKPAADAAKVTETAKVAETAPVAETAEKKAESKGKEQA) is disordered. Low complexity predominate over residues 62-81 (ADAAKVTETAKVAETAPVAE). The segment covering 82–95 (TAEKKAESKGKEQA) has biased composition (basic and acidic residues).

Belongs to the TatA/E family. The Tat system comprises two distinct complexes: a TatABC complex, containing multiple copies of TatA, TatB and TatC subunits, and a separate TatA complex, containing only TatA subunits. Substrates initially bind to the TatABC complex, which probably triggers association of the separate TatA complex to form the active translocon.

Its subcellular location is the cell inner membrane. In terms of biological role, part of the twin-arginine translocation (Tat) system that transports large folded proteins containing a characteristic twin-arginine motif in their signal peptide across membranes. TatA could form the protein-conducting channel of the Tat system. The protein is Sec-independent protein translocase protein TatA of Shewanella halifaxensis (strain HAW-EB4).